The following is a 562-amino-acid chain: Glycine betaine/proline/choline/ectoine transporter VP1456 (562 aa).

The next 12 membrane-spanning stretches (helical) occupy residues 68–88 (PVFGISAGLVVFCLISLLLVE), 110–130 (FFMWSTNFFLLFAVGLLFSPL), 147–167 (VSWLSMLFAAGMGIGLLFWSV), 203–223 (WGVHGWSIYALVALALAFFAF), 243–263 (AWGWLGHVIDILAVLSTLFGL), 287–307 (GIGTQMVVIAFVTFIAVLSVV), 322–342 (MIVAFALLIFITFITFDTAMG), 373–393 (WTVFYWAWWVSWSPFVGMFIA), 404–424 (FLFAVIVIPTLVTLVWMSVFG), 456–476 (VLPYSSVISILSIVLILVFFI), 503–523 (IFWACIEGSIAAVMLWVGGKE), and 531–551 (GVVATGLPFTFVLLLMCVSLV).

It belongs to the BCCT transporter (TC 2.A.15) family.

Its subcellular location is the cell inner membrane. Functionally, involved in the uptake of osmoprotectants. Can transport glycine betaine, proline, choline and ectoine. The polypeptide is Glycine betaine/proline/choline/ectoine transporter VP1456 (Vibrio parahaemolyticus serotype O3:K6 (strain RIMD 2210633)).